The following is a 150-amino-acid chain: Large ribosomal subunit protein bL9 (150 aa).

Belongs to the bacterial ribosomal protein bL9 family.

Its function is as follows. Binds to the 23S rRNA. The polypeptide is Large ribosomal subunit protein bL9 (Pseudoalteromonas atlantica (strain T6c / ATCC BAA-1087)).